A 447-amino-acid polypeptide reads, in one-letter code: Na(+)-translocating NADH-quinone reductase subunit A (447 aa).

Belongs to the NqrA family. Composed of six subunits; NqrA, NqrB, NqrC, NqrD, NqrE and NqrF.

The catalysed reaction is a ubiquinone + n Na(+)(in) + NADH + H(+) = a ubiquinol + n Na(+)(out) + NAD(+). In terms of biological role, NQR complex catalyzes the reduction of ubiquinone-1 to ubiquinol by two successive reactions, coupled with the transport of Na(+) ions from the cytoplasm to the periplasm. NqrA to NqrE are probably involved in the second step, the conversion of ubisemiquinone to ubiquinol. This Neisseria meningitidis serogroup B (strain ATCC BAA-335 / MC58) protein is Na(+)-translocating NADH-quinone reductase subunit A.